The primary structure comprises 324 residues: Acetyl-coenzyme A carboxylase carboxyl transferase subunit alpha (324 aa).

Residues 44–298 form the CoA carboxyltransferase C-terminal domain; that stretch reads RFQNQLVKLQ…KKELTEQLDS (255 aa).

It belongs to the AccA family. As to quaternary structure, acetyl-CoA carboxylase is a heterohexamer composed of biotin carboxyl carrier protein (accB), biotin carboxylase (accC) and two subunits each of ACCase subunit alpha (accA) and ACCase subunit beta (accD).

It is found in the plastid. Its subcellular location is the chloroplast. The enzyme catalyses N(6)-carboxybiotinyl-L-lysyl-[protein] + acetyl-CoA = N(6)-biotinyl-L-lysyl-[protein] + malonyl-CoA. It participates in lipid metabolism; malonyl-CoA biosynthesis; malonyl-CoA from acetyl-CoA: step 1/1. Component of the acetyl coenzyme A carboxylase (ACC) complex. First, biotin carboxylase catalyzes the carboxylation of biotin on its carrier protein (BCCP) and then the CO(2) group is transferred by the carboxyltransferase to acetyl-CoA to form malonyl-CoA. In Pyropia yezoensis (Susabi-nori), this protein is Acetyl-coenzyme A carboxylase carboxyl transferase subunit alpha.